We begin with the raw amino-acid sequence, 379 residues long: Protein PatA (379 aa).

The tract at residues 181 to 226 is disordered; sequence RREASSQEISSSTEHNQIPVNNRRSTKFTSPPHTQPKPEPRLPQIN. The span at 186–212 shows a compositional bias: polar residues; the sequence is SQEISSSTEHNQIPVNNRRSTKFTSPP. A Response regulatory domain is found at 262 to 378; the sequence is TIFCIDENPI…DLLKVIFKHI (117 aa). D313 bears the 4-aspartylphosphate mark.

The protein resides in the cell septum. Its function is as follows. Controls heterocyst pattern formation. Required for the differentiation of intercalary heterocysts but not for terminal heterocysts. In Nostoc sp. (strain PCC 7120 / SAG 25.82 / UTEX 2576), this protein is Protein PatA (patA).